Consider the following 233-residue polypeptide: Purine nucleoside phosphorylase DeoD-type (233 aa).

His4 contacts a purine D-ribonucleoside. Phosphate contacts are provided by residues Gly20, Arg24, Arg43, and 87–90 (RVGT). A purine D-ribonucleoside-binding positions include 178–180 (EME) and 202–203 (SD). The Proton donor role is filled by Asp203.

Belongs to the PNP/UDP phosphorylase family. Homohexamer; trimer of homodimers.

It catalyses the reaction a purine D-ribonucleoside + phosphate = a purine nucleobase + alpha-D-ribose 1-phosphate. It carries out the reaction a purine 2'-deoxy-D-ribonucleoside + phosphate = a purine nucleobase + 2-deoxy-alpha-D-ribose 1-phosphate. In terms of biological role, catalyzes the reversible phosphorolytic breakdown of the N-glycosidic bond in the beta-(deoxy)ribonucleoside molecules, with the formation of the corresponding free purine bases and pentose-1-phosphate. In Listeria monocytogenes serotype 4b (strain CLIP80459), this protein is Purine nucleoside phosphorylase DeoD-type.